A 188-amino-acid chain; its full sequence is NANOG neighbor homeobox (188 aa).

Residues 28–106 form a disordered region; the sequence is ETILANKKQS…NEKQKQYPEK (79 aa). The span at 57-106 shows a compositional bias: basic and acidic residues; sequence QNGKQKWREEGEAGRKREREKEEKNEKELQDEQENKRKRENEKQKQYPEK. The homeobox DNA-binding region spans 102-161; it reads QYPEKRLVSKSLMHTLWAKFKLNRCPTIQESLSLSFEFDMTHKQISQWFCKTRKKYNKEM.

The protein localises to the nucleus. This is NANOG neighbor homeobox (NANOGNB) from Homo sapiens (Human).